Reading from the N-terminus, the 73-residue chain is MAFAPPLPIRRRKVLIPRPRSRFLLVTCPKCGNRQVVFSHSTFRARCLNCGEVLVEPTGGKARILGKIERIYG.

Positions 28, 31, 47, and 50 each coordinate Zn(2+). The C4-type zinc finger occupies 28 to 50 (CPKCGNRQVVFSHSTFRARCLNC).

This sequence belongs to the eukaryotic ribosomal protein eS27 family. Part of the 30S ribosomal subunit. The cofactor is Zn(2+).

The protein is Small ribosomal subunit protein eS27 of Aeropyrum pernix (strain ATCC 700893 / DSM 11879 / JCM 9820 / NBRC 100138 / K1).